Reading from the N-terminus, the 138-residue chain is Small ribosomal subunit protein uS8c (138 aa).

This sequence belongs to the universal ribosomal protein uS8 family. In terms of assembly, part of the 30S ribosomal subunit.

It is found in the plastid. Its subcellular location is the chloroplast. In terms of biological role, one of the primary rRNA binding proteins, it binds directly to 16S rRNA central domain where it helps coordinate assembly of the platform of the 30S subunit. This is Small ribosomal subunit protein uS8c (rps8) from Chlorella vulgaris (Green alga).